Consider the following 710-residue polypeptide: Protein phosphatase 1 regulatory subunit 37 (710 aa).

A compositionally biased stretch (pro residues) spans 1 to 12; sequence MEIPPQEAPPGP. The interval 1–46 is disordered; sequence MEIPPQEAPPGPGADADADAEAEEAPAEAGSSSGASPPTDGRLKAA. Positions 16–26 are enriched in acidic residues; it reads ADADAEAEEAP. A compositionally biased stretch (low complexity) spans 27-38; the sequence is AEAGSSSGASPP. Serine 54 and serine 60 each carry phosphoserine. LRR repeat units follow at residues 224 to 244, 252 to 273, 281 to 301, 310 to 330, and 338 to 358; these read SLAVLHLENASLSGRPLMLLA, NLQELYLADNKLNGLQDSAQLG, SLQILDLRNNHVLDSGLAYIC, GLVTLVLWNNQLTHTGMAFLG, and SLETLNLGHNPIGNEGVRNLK. Residues 487–677 form a disordered region; it reads PLEESGDLPA…APPGLEAKGS (191 aa). Positions 512-531 are enriched in acidic residues; it reads SDSDSDSDREEQEEEEEDQS. The segment covering 543-565 has biased composition (low complexity); sequence SSSAPCPALLPSTDSLGPGDKSP. Serine 581 carries the post-translational modification Phosphoserine. Residues 603–624 show a composition bias toward pro residues; the sequence is PPVPPTSVSSPPPSPPSPPASP. The segment covering 637 to 649 has biased composition (polar residues); that stretch reads SEAQPQTEPSQAG. The segment covering 656–676 has biased composition (low complexity); it reads LKPEFALALAPEAPPGLEAKG.

Belongs to the PPP1R37 family. Interacts with PPP1CA.

Inhibits phosphatase activity of protein phosphatase 1 (PP1) complexes. The sequence is that of Protein phosphatase 1 regulatory subunit 37 (Ppp1r37) from Rattus norvegicus (Rat).